A 51-amino-acid polypeptide reads, in one-letter code: Large ribosomal subunit protein bL33 (51 aa).

A disordered region spans residues 1–21; it reads MRDKIKLESGAGTGHFYTTTK.

Belongs to the bacterial ribosomal protein bL33 family.

The protein is Large ribosomal subunit protein bL33 of Neisseria gonorrhoeae (strain ATCC 700825 / FA 1090).